We begin with the raw amino-acid sequence, 865 residues long: Xylosyltransferase 2 (865 aa).

Residues 1 to 15 (MVASARVQKLVRRYK) are Cytoplasmic-facing. The helical; Signal-anchor for type II membrane protein transmembrane segment at 16-36 (LAIATALAILLLQGLVVWSFS) threads the bilayer. Residues 37-865 (GLEEDEPGEK…GPVKADGRLR (829 aa)) are Lumenal-facing. The segment at 39–155 (EEDEPGEKGR…SVEGAPQPTD (117 aa)) is disordered. The span at 53-65 (RPLDPGEGSKDTD) shows a compositional bias: basic and acidic residues. The segment covering 73–82 (SAGRRHGRWR) has biased composition (basic residues). Asn-122 carries N-linked (GlcNAc...) asparagine glycosylation. 4 cysteine pairs are disulfide-bonded: Cys-162-Cys-190, Cys-206-Cys-448, Cys-467-Cys-480, and Cys-469-Cys-478. Residues Val-239, Asp-267, and 296–298 (TIW) contribute to the UDP-alpha-D-xylose site. Residue Asn-327 is glycosylated (N-linked (GlcNAc...) asparagine). Position 400–401 (400–401 (DW)) interacts with UDP-alpha-D-xylose. UDP-alpha-D-xylose is bound by residues Ser-481 and 504–505 (RK). Intrachain disulfides connect Cys-581–Cys-833 and Cys-826–Cys-839. Asn-683 carries N-linked (GlcNAc...) asparagine glycosylation.

Belongs to the glycosyltransferase 14 family. XylT subfamily. As to quaternary structure, monomer. Mg(2+) serves as cofactor. Requires Mn(2+) as cofactor. Post-translationally, contains disulfide bonds. As to expression, detected in brain, liver, lung, kidney, heart, spleen and testis, and at lower levels in skeletal muscle.

It is found in the golgi apparatus membrane. The protein resides in the secreted. It carries out the reaction UDP-alpha-D-xylose + L-seryl-[protein] = 3-O-(beta-D-xylosyl)-L-seryl-[protein] + UDP + H(+). The protein operates within glycan metabolism; chondroitin sulfate biosynthesis. It participates in glycan metabolism; heparan sulfate biosynthesis. In terms of biological role, catalyzes the first step in the biosynthesis of chondroitin sulfate, heparan sulfate and dermatan sulfate proteoglycans, such as DCN. Transfers D-xylose from UDP-D-xylose to specific serine residues of the core protein. The sequence is that of Xylosyltransferase 2 (Xylt2) from Mus musculus (Mouse).